A 224-amino-acid chain; its full sequence is UPF0758 protein Tbd_2588 (224 aa).

Residues 102-224 enclose the MPN domain; sequence ALSSPAAVRD…ALSFAEAGHL (123 aa). Zn(2+) is bound by residues His173, His175, and Asp186. A JAMM motif motif is present at residues 173-186; the sequence is HNHPSGVNEPSQAD.

Belongs to the UPF0758 family.

The protein is UPF0758 protein Tbd_2588 of Thiobacillus denitrificans (strain ATCC 25259 / T1).